The primary structure comprises 367 residues: Chorismate synthase (367 aa).

Residue arginine 48 coordinates NADP(+). Residues 125-127 (RSS), 238-239 (NA), glycine 278, 293-297 (KPTSS), and arginine 319 contribute to the FMN site.

The protein belongs to the chorismate synthase family. As to quaternary structure, homotetramer. FMNH2 is required as a cofactor.

The enzyme catalyses 5-O-(1-carboxyvinyl)-3-phosphoshikimate = chorismate + phosphate. It functions in the pathway metabolic intermediate biosynthesis; chorismate biosynthesis; chorismate from D-erythrose 4-phosphate and phosphoenolpyruvate: step 7/7. Its function is as follows. Catalyzes the anti-1,4-elimination of the C-3 phosphate and the C-6 proR hydrogen from 5-enolpyruvylshikimate-3-phosphate (EPSP) to yield chorismate, which is the branch point compound that serves as the starting substrate for the three terminal pathways of aromatic amino acid biosynthesis. This reaction introduces a second double bond into the aromatic ring system. The sequence is that of Chorismate synthase from Halorhodospira halophila (strain DSM 244 / SL1) (Ectothiorhodospira halophila (strain DSM 244 / SL1)).